Consider the following 165-residue polypeptide: Transcription antitermination protein NusB (165 aa).

The tract at residues Met1–Arg27 is disordered. The segment covering Asn10–Lys21 has biased composition (basic and acidic residues).

It belongs to the NusB family.

In terms of biological role, involved in transcription antitermination. Required for transcription of ribosomal RNA (rRNA) genes. Binds specifically to the boxA antiterminator sequence of the ribosomal RNA (rrn) operons. This Pseudomonas syringae pv. tomato (strain ATCC BAA-871 / DC3000) protein is Transcription antitermination protein NusB.